Reading from the N-terminus, the 169-residue chain is Probable phospholipid hydroperoxide glutathione peroxidase (169 aa).

The active site involves Cys-43.

It belongs to the glutathione peroxidase family. As to expression, germinating seed, apex, flower, as well as in stressed tissues.

The protein resides in the cytoplasm. It catalyses the reaction a hydroperoxy polyunsaturated fatty acid + 2 glutathione = a hydroxy polyunsaturated fatty acid + glutathione disulfide + H2O. Functionally, protects cells and enzymes from oxidative damage, by catalyzing the reduction of hydrogen peroxide, lipid peroxides and organic hydroperoxide, by glutathione. The polypeptide is Probable phospholipid hydroperoxide glutathione peroxidase (Nicotiana sylvestris (Wood tobacco)).